A 37-amino-acid polypeptide reads, in one-letter code: MEVNTLAFIAVLLFLAVPTAFLLIPYVKTASASSGSN.

Residues alanine 7–valine 27 traverse the membrane as a helical segment.

It belongs to the PsbM family. As to quaternary structure, PSII is composed of 1 copy each of membrane proteins PsbA, PsbB, PsbC, PsbD, PsbE, PsbF, PsbH, PsbI, PsbJ, PsbK, PsbL, PsbM, PsbT, PsbX, PsbY, PsbZ, Psb30/Ycf12, at least 3 peripheral proteins of the oxygen-evolving complex and a large number of cofactors. It forms dimeric complexes.

It localises to the plastid. It is found in the chloroplast thylakoid membrane. One of the components of the core complex of photosystem II (PSII). PSII is a light-driven water:plastoquinone oxidoreductase that uses light energy to abstract electrons from H(2)O, generating O(2) and a proton gradient subsequently used for ATP formation. It consists of a core antenna complex that captures photons, and an electron transfer chain that converts photonic excitation into a charge separation. This subunit is found at the monomer-monomer interface. The polypeptide is Photosystem II reaction center protein M (Pinus thunbergii (Japanese black pine)).